A 188-amino-acid polypeptide reads, in one-letter code: uncharacterized protein (188 aa).

Residues 136 to 156 (TLVKLLLLFLSLMVVIVGVWW) traverse the membrane as a helical segment.

It localises to the host membrane. This is an uncharacterized protein from Magallana gigas (Pacific oyster).